We begin with the raw amino-acid sequence, 395 residues long: F-box only protein 7 (395 aa).

The F-box domain occupies 19–70 (NHDWSKLCPDILRKIIESLSSLDFYRAKIVCSDWYSVWKTCVKRPLRPWRII).

The sequence is that of F-box only protein 7 (FBX7) from Arabidopsis thaliana (Mouse-ear cress).